Reading from the N-terminus, the 438-residue chain is Adenosylhomocysteinase (438 aa).

Positions 61, 137, and 162 each coordinate substrate. 163 to 165 (TTT) contacts NAD(+). Substrate contacts are provided by K192 and D196. NAD(+)-binding positions include N197, 226 to 231 (GYGDVG), E249, N284, 305 to 307 (IGH), and N352.

It belongs to the adenosylhomocysteinase family. It depends on NAD(+) as a cofactor.

The protein localises to the cytoplasm. The catalysed reaction is S-adenosyl-L-homocysteine + H2O = L-homocysteine + adenosine. Its pathway is amino-acid biosynthesis; L-homocysteine biosynthesis; L-homocysteine from S-adenosyl-L-homocysteine: step 1/1. Its function is as follows. May play a key role in the regulation of the intracellular concentration of adenosylhomocysteine. The chain is Adenosylhomocysteinase from Flavobacterium psychrophilum (strain ATCC 49511 / DSM 21280 / CIP 103535 / JIP02/86).